We begin with the raw amino-acid sequence, 391 residues long: Elongation factor Tu (391 aa).

In terms of domain architecture, tr-type G spans Lys-10–Ala-201. The G1 stretch occupies residues Gly-19–Thr-26. A GTP-binding site is contributed by Gly-19–Thr-26. Thr-26 is a Mg(2+) binding site. The tract at residues Gly-55 to Ser-59 is G2. A G3 region spans residues Asp-76 to Gly-79. GTP is bound by residues Asp-76 to His-80 and Asn-131 to Asp-134. The G4 stretch occupies residues Asn-131 to Asp-134. The tract at residues Ser-169 to Leu-171 is G5.

The protein belongs to the TRAFAC class translation factor GTPase superfamily. Classic translation factor GTPase family. EF-Tu/EF-1A subfamily. Monomer.

It is found in the cytoplasm. It carries out the reaction GTP + H2O = GDP + phosphate + H(+). Functionally, GTP hydrolase that promotes the GTP-dependent binding of aminoacyl-tRNA to the A-site of ribosomes during protein biosynthesis. This is Elongation factor Tu from Cereibacter sphaeroides (strain ATCC 17029 / ATH 2.4.9) (Rhodobacter sphaeroides).